Here is a 148-residue protein sequence, read N- to C-terminus: Deoxyuridine 5'-triphosphate nucleotidohydrolase (148 aa).

Residues 67–69 (RSG), Asn80, 84–86 (TID), and Lys94 contribute to the substrate site.

This sequence belongs to the dUTPase family. Mg(2+) serves as cofactor.

It catalyses the reaction dUTP + H2O = dUMP + diphosphate + H(+). Its pathway is pyrimidine metabolism; dUMP biosynthesis; dUMP from dCTP (dUTP route): step 2/2. This enzyme is involved in nucleotide metabolism: it produces dUMP, the immediate precursor of thymidine nucleotides and it decreases the intracellular concentration of dUTP so that uracil cannot be incorporated into DNA. The protein is Deoxyuridine 5'-triphosphate nucleotidohydrolase of Orientia tsutsugamushi (strain Boryong) (Rickettsia tsutsugamushi).